Consider the following 533-residue polypeptide: Flavin-containing monooxygenase 5 (533 aa).

R5 is modified (dimethylated arginine). Residues G10–S14, E33, and L41–W42 contribute to the FAD site. S54 carries the phosphoserine modification. Position 56 is a phosphotyrosine (Y56). S58 carries the post-translational modification Phosphoserine. N62 to T63 contributes to the FAD binding site. NADP(+) is bound at residue S196 to D199. Phosphoserine is present on S280. Position 284 is a phosphothreonine (T284). S401 is modified (phosphoserine). Residues T513–F533 form a helical membrane-spanning segment.

This sequence belongs to the FMO family. FAD serves as cofactor. In terms of tissue distribution, expressed in fetal and adult liver.

It is found in the microsome membrane. Its subcellular location is the endoplasmic reticulum membrane. The enzyme catalyses N,N-dimethylaniline + NADPH + O2 + H(+) = N,N-dimethylaniline N-oxide + NADP(+) + H2O. The catalysed reaction is NADPH + O2 + H(+) = H2O2 + NADP(+). It carries out the reaction heptan-2-one + NADPH + O2 + H(+) = pentyl acetate + NADP(+) + H2O. It catalyses the reaction octan-3-one + NADPH + O2 + H(+) = pentyl propanoate + NADP(+) + H2O. The enzyme catalyses octan-3-one + NADPH + O2 + H(+) = ethyl hexanoate + NADP(+) + H2O. The catalysed reaction is hexan-3-one + NADPH + O2 + H(+) = ethyl butanoate + NADP(+) + H2O. It carries out the reaction hexan-3-one + NADPH + O2 + H(+) = propyl propanoate + NADP(+) + H2O. It catalyses the reaction heptan-4-one + NADPH + O2 + H(+) = propyl butanoate + NADP(+) + H2O. The enzyme catalyses (2E)-geranial + NADPH + O2 + H(+) = (1E)-2,6-dimethylhepta-1,5-dien-1-yl formate + NADP(+) + H2O. The catalysed reaction is sulcatone + NADPH + O2 + H(+) = 4-methylpent-3-en-1-yl acetate + NADP(+) + H2O. Its function is as follows. Acts as a Baeyer-Villiger monooxygenase on a broad range of substrates. Catalyzes the insertion of an oxygen atom into a carbon-carbon bond adjacent to a carbonyl, which converts ketones to esters. Active on diverse carbonyl compounds, whereas soft nucleophiles are mostly non- or poorly reactive. In contrast with other forms of FMO it is non- or poorly active on 'classical' substrates such as drugs, pesticides, and dietary components containing soft nucleophilic heteroatoms. Able to oxidize drug molecules bearing a carbonyl group on an aliphatic chain, such as nabumetone and pentoxifylline. Also, in the absence of substrates, shows slow but yet significant NADPH oxidase activity. Acts as a positive modulator of cholesterol biosynthesis as well as glucose homeostasis, promoting metabolic aging via pleiotropic effects. This Homo sapiens (Human) protein is Flavin-containing monooxygenase 5.